The primary structure comprises 1314 residues: E3 ubiquitin-protein ligase RNF123 (1314 aa).

Alanine 2 is subject to N-acetylalanine. The region spanning 74–254 (VDSEDEESQG…VAFNFGSRPL (181 aa)) is the B30.2/SPRY domain. The segment at 460-481 (HRSSREGKDSAEDRAEAAEERP) is disordered. The segment covering 462 to 481 (SSREGKDSAEDRAEAAEERP) has biased composition (basic and acidic residues). Serine 675 carries the phosphoserine modification. Residue arginine 683 is modified to Asymmetric dimethylarginine. The interaction with NFKB1 stretch occupies residues 968–974 (WILVRLW). Positions 1254, 1257, 1269, 1271, 1274, 1277, 1288, and 1291 each coordinate Zn(2+). The segment at 1254–1292 (CPICYAHPISAVFQPCGHKSCKACIDQHLMNNKDCFFCK) adopts an RING-type zinc-finger fold.

In terms of assembly, component of the KPC complex composed of RNF123/KPC1 and UBAC1/KPC2. Interacts with UBAC1 and CDKN1B via its N-terminal domain. Interacts with RIGI (via N-terminus) and IFIH1 (via N-terminus). In terms of processing, ubiquitinated, leading to its degradation. Deubiquitinated by USP19, thereby stimulating CDKN1B ubiquitin-dependent degradation.

It is found in the cytoplasm. The enzyme catalyses S-ubiquitinyl-[E2 ubiquitin-conjugating enzyme]-L-cysteine + [acceptor protein]-L-lysine = [E2 ubiquitin-conjugating enzyme]-L-cysteine + N(6)-ubiquitinyl-[acceptor protein]-L-lysine.. The protein operates within protein modification; protein ubiquitination. Its function is as follows. Catalytic subunit of the KPC complex that acts as E3 ubiquitin-protein ligase. Promotes the ubiquitination and proteasome-mediated degradation of CDKN1B which is the cyclin-dependent kinase inhibitor at the G0-G1 transition of the cell cycle. Also acts as a key regulator of the NF-kappa-B signaling by promoting maturation of the NFKB1 component of NF-kappa-B. Acts by catalyzing ubiquitination of the NFKB1 p105 precursor, leading to limited proteasomal degradation of NFKB1 p105 and generation of the active NFKB1 p50 subunit. Functions also as an inhibitor of innate antiviral signaling mediated by RIGI and IFIH1 independently of its E3 ligase activity. Interacts with the N-terminal CARD domains of RIGI and IFIH1 and competes with the downstream adapter MAVS. The protein is E3 ubiquitin-protein ligase RNF123 of Oryctolagus cuniculus (Rabbit).